Here is a 428-residue protein sequence, read N- to C-terminus: MLGALLLSGAVHAAVQPLESVVAIVDNDVIMKSQMDQRVREVQQTIAKRGSGVPPAEALQPQVLDRLILENLQLQMGERSGIRVSDNELNQAIGTIAQRNNMSVEQFRAALAHDGLSYNDAREQVRREMIISRVRQRRVAERIQVSQQEVKNFLASDQGKAQLSEEFHLANILIATPDSASSDAIQAAAVKAKGIYDQLKKGADFTRLAATTSSSENALEGGDMGWRKAAQLPPPFGDMLSAMPVGDVTPPARTPGGFIILKLLEKRGGQGQAQMRDEVHVRHILIKPSEIRNEEETKRLAEKIYDRIQNGEDFAELAKSFSEDPGSALNGGDLNWVDPNSLVPEFRQVMNETPQGELSKPFKTAYGWHVLEVLGRRSTDATDQAREQQALNVLRNRKYDEELQTWLRQIRDEAYVEIKLPGATQAAQ.

Residues 1 to 13 form the signal peptide; it reads MLGALLLSGAVHA. PpiC domains follow at residues 164 to 265 and 276 to 375; these read SEEF…KLLE and RDEV…EVLG.

It localises to the periplasm. It carries out the reaction [protein]-peptidylproline (omega=180) = [protein]-peptidylproline (omega=0). Chaperone involved in the correct folding and assembly of outer membrane proteins. Recognizes specific patterns of aromatic residues and the orientation of their side chains, which are found more frequently in integral outer membrane proteins. May act in both early periplasmic and late outer membrane-associated steps of protein maturation. The polypeptide is Chaperone SurA (Pseudomonas savastanoi pv. phaseolicola (strain 1448A / Race 6) (Pseudomonas syringae pv. phaseolicola (strain 1448A / Race 6))).